Here is a 361-residue protein sequence, read N- to C-terminus: Serpentine receptor class X 45 (361 aa).

A run of 7 helical transmembrane segments spans residues 20–40 (LLIFFTSFIGFACNTFIAFYI), 58–78 (AAGDAVFVLVWAFYFAPVLFF), 92–112 (FAQLCLICYDISIYTHLVISL), 133–153 (TTFLICSIIFVSFGFSWFLVI), 176–196 (MINVYYAEFFRGLIVISMFAI), 242–262 (LLYVIELVTYFYISLRFPVPL), and 278–298 (LLTTYAWILVHALDGVITLIF). N317 carries an N-linked (GlcNAc...) asparagine glycan.

Belongs to the G-protein coupled receptor 1 family.

Its subcellular location is the cell membrane. In Caenorhabditis elegans, this protein is Serpentine receptor class X 45 (srx-45).